Consider the following 144-residue polypeptide: Large ribosomal subunit protein uL15 (144 aa).

The segment at 1-59 (MELNNLKPAEGAKHAKRRVGRGIGSGLGKTAGRGHKGQKSRSGGFHKVGFEGGQMPLQR) is disordered. A compositionally biased stretch (gly residues) spans 21–31 (RGIGSGLGKTA).

The protein belongs to the universal ribosomal protein uL15 family. As to quaternary structure, part of the 50S ribosomal subunit.

Binds to the 23S rRNA. This chain is Large ribosomal subunit protein uL15, found in Burkholderia thailandensis (strain ATCC 700388 / DSM 13276 / CCUG 48851 / CIP 106301 / E264).